Reading from the N-terminus, the 241-residue chain is ATP synthase subunit a (241 aa).

5 consecutive transmembrane segments (helical) span residues 21–41 (LASI…AIAC), 84–104 (VTLI…AIVI), 116–136 (DATV…YYGI), 183–203 (ILIG…WIIG), and 207–227 (LIAW…IFIM).

The protein belongs to the ATPase A chain family. As to quaternary structure, F-type ATPases have 2 components, CF(1) - the catalytic core - and CF(0) - the membrane proton channel. CF(1) has five subunits: alpha(3), beta(3), gamma(1), delta(1), epsilon(1). CF(0) has three main subunits: a(1), b(2) and c(9-12). The alpha and beta chains form an alternating ring which encloses part of the gamma chain. CF(1) is attached to CF(0) by a central stalk formed by the gamma and epsilon chains, while a peripheral stalk is formed by the delta and b chains.

It localises to the cell membrane. In terms of biological role, key component of the proton channel; it plays a direct role in the translocation of protons across the membrane. In Staphylococcus carnosus (strain TM300), this protein is ATP synthase subunit a.